The chain runs to 54 residues: UPF0391 membrane protein TERTU_3637 (54 aa).

2 consecutive transmembrane segments (helical) span residues 4–24 and 29–49; these read WALV…TGLA and SIAW…LVAG.

Belongs to the UPF0391 family.

Its subcellular location is the cell membrane. The polypeptide is UPF0391 membrane protein TERTU_3637 (Teredinibacter turnerae (strain ATCC 39867 / T7901)).